The chain runs to 312 residues: Glycine--tRNA ligase alpha subunit (312 aa).

The protein belongs to the class-II aminoacyl-tRNA synthetase family. Tetramer of two alpha and two beta subunits.

Its subcellular location is the cytoplasm. It carries out the reaction tRNA(Gly) + glycine + ATP = glycyl-tRNA(Gly) + AMP + diphosphate. The chain is Glycine--tRNA ligase alpha subunit from Methylobacillus flagellatus (strain ATCC 51484 / DSM 6875 / VKM B-1610 / KT).